A 399-amino-acid polypeptide reads, in one-letter code: Phosphoglycerate kinase (399 aa).

Substrate contacts are provided by residues 21–23 (DFN), Arg-36, 59–62 (HLGR), Arg-120, and Arg-158. ATP contacts are provided by residues Lys-209, Gly-297, Glu-328, and 355 to 358 (GGDS).

This sequence belongs to the phosphoglycerate kinase family. As to quaternary structure, monomer.

The protein localises to the cytoplasm. It carries out the reaction (2R)-3-phosphoglycerate + ATP = (2R)-3-phospho-glyceroyl phosphate + ADP. Its pathway is carbohydrate degradation; glycolysis; pyruvate from D-glyceraldehyde 3-phosphate: step 2/5. The chain is Phosphoglycerate kinase from Streptococcus suis (strain 05ZYH33).